Here is a 246-residue protein sequence, read N- to C-terminus: rRNA methyltransferase 2, mitochondrial (246 aa).

Residues 1-18 constitute a mitochondrion transit peptide; it reads MAGYLKLVCVSFQRQGFH. Residues 83–86, aspartate 112, 129–130, and aspartate 154 contribute to the S-adenosyl-L-methionine site; these read PGAW and DV. Lysine 194 serves as the catalytic Proton acceptor.

The protein belongs to the class I-like SAM-binding methyltransferase superfamily. RNA methyltransferase RlmE family. As to expression, widely expressed, with highest expression in muscle, placenta, and heart.

It localises to the mitochondrion. It catalyses the reaction uridine(1369) in 16S rRNA + S-adenosyl-L-methionine = 2'-O-methyluridine(1369) in 16S rRNA + S-adenosyl-L-homocysteine + H(+). In terms of biological role, S-adenosyl-L-methionine-dependent 2'-O-ribose methyltransferase that catalyzes the formation of 2'-O-methyluridine at position 1369 (Um1369) in the 16S mitochondrial large subunit ribosomal RNA (mtLSU rRNA), a universally conserved modification in the peptidyl transferase domain of the mtLSU rRNA. This activity may require prior 2'-O-methylguanosine modification at position 1370 (Gm1370) by MRM3. Essential for late-stage assembly of mtLSU required for efficient translation of mitochondrial DNA encoded proteins; methyltransferase activity is not required for this function. Essential for mitochondrial respiratory function. The protein is rRNA methyltransferase 2, mitochondrial of Homo sapiens (Human).